A 197-amino-acid polypeptide reads, in one-letter code: UPF0215 protein MK0057 (197 aa).

The protein belongs to the UPF0215 family.

This is UPF0215 protein MK0057 from Methanopyrus kandleri (strain AV19 / DSM 6324 / JCM 9639 / NBRC 100938).